The following is a 335-amino-acid chain: Probable phosphoglycerate mutase ARB_03491 (335 aa).

An N-terminal signal peptide occupies residues 1-24 (MAGRILLGLTLLATSLPLLAMGDA). The active-site Tele-phosphohistidine intermediate is H108. E211 functions as the Proton donor/acceptor in the catalytic mechanism.

It belongs to the phosphoglycerate mutase family.

The protein resides in the secreted. Functionally, probable phosphomutase that may have a function related to the manipulation of phosphate groups on carbohydrates. The sequence is that of Probable phosphoglycerate mutase ARB_03491 from Arthroderma benhamiae (strain ATCC MYA-4681 / CBS 112371) (Trichophyton mentagrophytes).